The sequence spans 283 residues: Phosphatidylserine decarboxylase proenzyme (283 aa).

Active-site charge relay system; for autoendoproteolytic cleavage activity residues include D88, H145, and S248. S248 acts as the Schiff-base intermediate with substrate; via pyruvic acid; for decarboxylase activity in catalysis. S248 carries the pyruvic acid (Ser); by autocatalysis modification.

This sequence belongs to the phosphatidylserine decarboxylase family. PSD-B subfamily. Prokaryotic type I sub-subfamily. As to quaternary structure, heterodimer of a large membrane-associated beta subunit and a small pyruvoyl-containing alpha subunit. Pyruvate is required as a cofactor. In terms of processing, is synthesized initially as an inactive proenzyme. Formation of the active enzyme involves a self-maturation process in which the active site pyruvoyl group is generated from an internal serine residue via an autocatalytic post-translational modification. Two non-identical subunits are generated from the proenzyme in this reaction, and the pyruvate is formed at the N-terminus of the alpha chain, which is derived from the carboxyl end of the proenzyme. The autoendoproteolytic cleavage occurs by a canonical serine protease mechanism, in which the side chain hydroxyl group of the serine supplies its oxygen atom to form the C-terminus of the beta chain, while the remainder of the serine residue undergoes an oxidative deamination to produce ammonia and the pyruvoyl prosthetic group on the alpha chain. During this reaction, the Ser that is part of the protease active site of the proenzyme becomes the pyruvoyl prosthetic group, which constitutes an essential element of the active site of the mature decarboxylase.

It localises to the cell membrane. The enzyme catalyses a 1,2-diacyl-sn-glycero-3-phospho-L-serine + H(+) = a 1,2-diacyl-sn-glycero-3-phosphoethanolamine + CO2. Its pathway is phospholipid metabolism; phosphatidylethanolamine biosynthesis; phosphatidylethanolamine from CDP-diacylglycerol: step 2/2. In terms of biological role, catalyzes the formation of phosphatidylethanolamine (PtdEtn) from phosphatidylserine (PtdSer). The chain is Phosphatidylserine decarboxylase proenzyme from Variovorax paradoxus (strain S110).